The chain runs to 338 residues: Malate dehydrogenase, mitochondrial (338 aa).

The N-terminal 24 residues, 1–24, are a transit peptide targeting the mitochondrion; that stretch reads MLSALARPVGAALRRSFSTSAQNN. NAD(+) contacts are provided by residues 31–37 and Asp-57; that span reads GASGGIG. Ser-33 is a glycosylation site (O-linked (GlcNAc) serine). An N6-acetyllysine; alternate mark is found at Lys-78 and Lys-91. Residues Lys-78 and Lys-91 each carry the N6-succinyllysine; alternate modification. Positions 104 and 110 each coordinate substrate. NAD(+)-binding positions include Asn-117 and 140–142; that span reads ISN. Asn-142 lines the substrate pocket. Lys-165 is modified (N6-acetyllysine). Residue Arg-176 participates in substrate binding. Lys-185 carries the N6-acetyllysine; alternate modification. Position 185 is an N6-succinyllysine; alternate (Lys-185). The active-site Proton acceptor is His-200. Position 203 is an N6-succinyllysine (Lys-203). N6-acetyllysine; alternate occurs at positions 215 and 239. N6-succinyllysine; alternate is present on residues Lys-215 and Lys-239. Lys-239 is modified (N6-malonyllysine; alternate). Position 246 is a phosphoserine (Ser-246). An NAD(+)-binding site is contributed by Met-251. Residue Lys-269 is modified to N6-succinyllysine. An N6-acetyllysine; alternate mark is found at Lys-296, Lys-301, Lys-307, Lys-314, and Lys-324. Lys-296, Lys-301, Lys-307, Lys-314, and Lys-324 each carry N6-succinyllysine; alternate. An N6-malonyllysine; alternate modification is found at Lys-307. Phosphoserine is present on Ser-326. Residues Lys-328, Lys-329, and Lys-335 each carry the N6-acetyllysine; alternate modification. Lys-328 carries the N6-succinyllysine; alternate modification. The residue at position 329 (Lys-329) is an N6-malonyllysine; alternate. Lys-335 carries the N6-succinyllysine; alternate modification.

Belongs to the LDH/MDH superfamily. MDH type 1 family. In terms of assembly, homodimer. Acetylation is enhanced after treatment either with trichostin A (TCA) or with nicotinamide (NAM) with the appearance of tri- and tetraacetylations. Glucose also increases acetylation. Expressed in flagella of epididymal sperm.

It localises to the mitochondrion matrix. It catalyses the reaction (S)-malate + NAD(+) = oxaloacetate + NADH + H(+). Its activity is regulated as follows. Enzyme activity is enhanced by acetylation. In Rattus norvegicus (Rat), this protein is Malate dehydrogenase, mitochondrial (Mdh2).